The chain runs to 556 residues: MAELDLIAPGPLTGVTAHPLAPLGPDPVSAIPVEKEDADPLSKSGEETQEQGHDPAELGAPGEEDQILCDFCLGASRVRAVKSCLTCMVNYCEEHLRPHQENSKLHSHQLTEPAKDQDLRTCPAHHSPLVSFCHTHQQCICQECGEGEHRGDSTVSLDAARRNKEVDLRCMQLDLEQKLKLNENAIARLQANHKSVLVSVSEVKVVAEEKFGELLAAVRKAQADVMVFLEEKEQAALNQVNSIKTHLEHRSLEMEKSKQELERLAAISNTVLFLEEYCKLKKTEDTASPSIYIGLKDKLSGIRKVITDSTLNLIQLLESYKEKLQEFSREEEYDIRTQVSAIVQRKYRTSKPEPRTRDEFLQYACDITFDPDTAHRYLRLQEDNRKVTNTTPWEHPYPDLPSRFLHWRQVLSQQSLYLHRYYFEVELSGGGTYVGLTCKGIDRKGEERNSCISGNSFSWSIHWNGKEFTAWHSDTETPLKVSPFRRLGIYVNFPGGILSFYGVEYDAMTLIHKFDCKFSEPVYAAFWLSKKENAIRIVDLGEEPEKPAGSSVEAAP.

Residues 1-60 (MAELDLIAPGPLTGVTAHPLAPLGPDPVSAIPVEKEDADPLSKSGEETQEQGHDPAELGA) form a disordered region. A compositionally biased stretch (basic and acidic residues) spans 33 to 56 (VEKEDADPLSKSGEETQEQGHDPA). B box-type zinc fingers lie at residues 64–113 (EDQI…LTEP) and 117–156 (QDLRTCPAHHSPLVSFCHTHQQCICQECGEGEHRGDSTVS). At S107 the chain carries Phosphoserine. Coiled-coil stretches lie at residues 163–266 (NKEV…RLAA) and 312–332 (NLIQLLESYKEKLQEFSREEE). S195 carries the post-translational modification Phosphoserine. Residues 347–545 (YRTSKPEPRT…RIVDLGEEPE (199 aa)) form the B30.2/SPRY domain.

This sequence belongs to the TRIM/RBCC family. Homodimerizes via its coiled-coil domain. Heterodimerizes with MID1, TRIM24 and PML. Interacts with Galectin-3/LGALS3 in a ULK1-dependent manner; this interaction mediates autophagy of damage endomembranes. Interacts with BECN1. Interacts with ATG16L1. Interacts with p62/SQSTM and LC3B/MAP1LC3B. Phosphorylated by ULK1. In terms of processing, auto-ubiquitinates via its B-Boxes. Widely expressed. Expressed in basal keratinocytes.

It localises to the cytoplasm. The enzyme catalyses S-ubiquitinyl-[E2 ubiquitin-conjugating enzyme]-L-cysteine + [acceptor protein]-L-lysine = [E2 ubiquitin-conjugating enzyme]-L-cysteine + N(6)-ubiquitinyl-[acceptor protein]-L-lysine.. E3 ubiquitin ligase that plays an essential role in the organization of autophagic response and ubiquitination upon lysosomal and phagosomal damages. Plays a role in the stress-induced biogenesis and degradation of protein aggresomes by regulating the p62-KEAP1-NRF2 signaling and particularly by modulating the ubiquitination levels and thus stability of NRF2. Acts as a scaffold protein and facilitates autophagic degradation of protein aggregates by interacting with p62/SQSTM, ATG16L1 and LC3B/MAP1LC3B. In turn, protects the cell against oxidative stress-induced cell death as a consequence of endomembrane damage. The sequence is that of Tripartite motif-containing protein 16 (Trim16) from Mus musculus (Mouse).